The following is a 274-amino-acid chain: Protein A11 homolog (274 aa).

A coiled-coil region spans residues 106–136; that stretch reads DDNKRVHLLEQEIAELRKKKTKSKNLLDFTN.

Belongs to the poxviridae A11 family. As to quaternary structure, homomultimer. Interacts with A32. Post-translationally, phosphorylated by a F10-independent mechanism.

It localises to the host cytoplasm. Required for viral crescent formation early during virus morphogenesis. The polypeptide is Protein A11 homolog (Fowlpox virus (strain NVSL) (FPV)).